We begin with the raw amino-acid sequence, 441 residues long: MSGSLWLSLALSLAVLAQFKVSAAPNLVCFYDSQGSQRQGLAQFSITDIELALQFCTHLVYGYAGVNADNFEMQSINKRLDLEQRHLAQVTSMKERYPHIKFLLSVGGDADTNEGNQYIKLLESGQQGHRRFIESARDLVRRYNFDGLDLALQLPRNKPRKVHGDVGSAWKSFKKFFTGDYIVDTESETHKGQVTALIKDLSAALKQNDLLLSLTVLPNVNSSWYYDAPSIAPSLDFINLGTFDFLTPQRNPEEADFSAPTYEAVGQNRLGHYNLNFQMEHWLLQRVPANKINIGIATYGRTWKMSKDSGDSGMPVVSSTQGPAPAGPQSKQEGLLNWAEICSLMPNPSNSNARGPNAPVKRVVDPTKRYGSYAFRAADENGDHGLWISYDDPDSGSSKAMYARARNLGGVALFDLTQDDFRGQCTGDRFPMLRAIKYRLL.

The signal sequence occupies residues methionine 1–alanine 23. One can recognise a GH18 domain in the interval proline 25–leucine 441. Cysteines 29 and 56 form a disulfide. An N-linked (GlcNAc...) asparagine glycan is attached at asparagine 221. Residues glycine 310–lysine 331 are disordered. Residues cysteine 342 and cysteine 425 are joined by a disulfide bond.

This sequence belongs to the glycosyl hydrolase 18 family. IDGF subfamily. Glycosylated.

Its subcellular location is the secreted. Cooperates with insulin-like peptides to stimulate the proliferation, polarization and motility of imaginal disk cells. May act by stabilizing the binding of insulin-like peptides to its receptor through a simultaneous interaction with both molecules to form a multiprotein signaling complex. The protein is Chitinase-like protein Idgf3 (Idgf3) of Drosophila simulans (Fruit fly).